We begin with the raw amino-acid sequence, 139 residues long: Putative pre-16S rRNA nuclease (139 aa).

The protein belongs to the YqgF nuclease family.

It localises to the cytoplasm. Functionally, could be a nuclease involved in processing of the 5'-end of pre-16S rRNA. The chain is Putative pre-16S rRNA nuclease from Pectobacterium atrosepticum (strain SCRI 1043 / ATCC BAA-672) (Erwinia carotovora subsp. atroseptica).